The sequence spans 264 residues: Acyl-[acyl-carrier-protein]--UDP-N-acetylglucosamine O-acyltransferase (264 aa).

The protein belongs to the transferase hexapeptide repeat family. LpxA subfamily. In terms of assembly, homotrimer.

Its subcellular location is the cytoplasm. The catalysed reaction is a (3R)-hydroxyacyl-[ACP] + UDP-N-acetyl-alpha-D-glucosamine = a UDP-3-O-[(3R)-3-hydroxyacyl]-N-acetyl-alpha-D-glucosamine + holo-[ACP]. Its pathway is glycolipid biosynthesis; lipid IV(A) biosynthesis; lipid IV(A) from (3R)-3-hydroxytetradecanoyl-[acyl-carrier-protein] and UDP-N-acetyl-alpha-D-glucosamine: step 1/6. Its function is as follows. Involved in the biosynthesis of lipid A, a phosphorylated glycolipid that anchors the lipopolysaccharide to the outer membrane of the cell. The protein is Acyl-[acyl-carrier-protein]--UDP-N-acetylglucosamine O-acyltransferase of Rickettsia africae (strain ESF-5).